Reading from the N-terminus, the 343-residue chain is N-acetyl-gamma-glutamyl-phosphate reductase (343 aa).

Residue Cys-150 is part of the active site.

The protein belongs to the NAGSA dehydrogenase family. Type 1 subfamily.

The protein localises to the cytoplasm. It catalyses the reaction N-acetyl-L-glutamate 5-semialdehyde + phosphate + NADP(+) = N-acetyl-L-glutamyl 5-phosphate + NADPH + H(+). It functions in the pathway amino-acid biosynthesis; L-arginine biosynthesis; N(2)-acetyl-L-ornithine from L-glutamate: step 3/4. Its function is as follows. Catalyzes the NADPH-dependent reduction of N-acetyl-5-glutamyl phosphate to yield N-acetyl-L-glutamate 5-semialdehyde. This chain is N-acetyl-gamma-glutamyl-phosphate reductase, found in Nitrosococcus oceani (strain ATCC 19707 / BCRC 17464 / JCM 30415 / NCIMB 11848 / C-107).